The sequence spans 463 residues: Chromosomal replication initiator protein DnaA (463 aa).

The domain I, interacts with DnaA modulators stretch occupies residues 1–84; sequence MNTNQIILTN…QLFQHYNNAI (84 aa). Residues 84-124 are domain II; it reads IKTVEIITKELPASNQATLELPTKTFADIGSSELNSENIFS. Residues 125–343 form a domain III, AAA+ region region; sequence TFDIRFTFDN…GALNKVIAHS (219 aa). ATP-binding residues include Gly-171, Gly-173, Lys-174, and Thr-175. Residues 344–463 are domain IV, binds dsDNA; the sequence is NFTAKEITLE…INLMMKILQN (120 aa).

The protein belongs to the DnaA family. As to quaternary structure, oligomerizes as a right-handed, spiral filament on DNA at oriC.

It localises to the cytoplasm. Functionally, plays an essential role in the initiation and regulation of chromosomal replication. ATP-DnaA binds to the origin of replication (oriC) to initiate formation of the DNA replication initiation complex once per cell cycle. Binds the DnaA box (a 9 base pair repeat at the origin) and separates the double-stranded (ds)DNA. Forms a right-handed helical filament on oriC DNA; dsDNA binds to the exterior of the filament while single-stranded (ss)DNA is stabiized in the filament's interior. The ATP-DnaA-oriC complex binds and stabilizes one strand of the AT-rich DNA unwinding element (DUE), permitting loading of DNA polymerase. After initiation quickly degrades to an ADP-DnaA complex that is not apt for DNA replication. Binds acidic phospholipids. This is Chromosomal replication initiator protein DnaA from Rickettsia bellii (strain RML369-C).